The primary structure comprises 226 residues: ATP synthase F(0) complex subunit a (226 aa).

The next 5 membrane-spanning stretches (helical) occupy residues 5–25, 68–88, 97–117, 136–156, and 189–209; these read LFAPFMIPVMLGIPITTLIII, WSLMLISLFLFIASTNLLGML, QLSMNVGMAIPLWAGTVTTGF, FLIPMLVIIETISLFIQPVAW, and AFITFTILALLTILEFAVALI.

Belongs to the ATPase A chain family. As to quaternary structure, component of the ATP synthase complex composed at least of ATP5F1A/subunit alpha, ATP5F1B/subunit beta, ATP5MC1/subunit c (homooctomer), MT-ATP6/subunit a, MT-ATP8/subunit 8, ATP5ME/subunit e, ATP5MF/subunit f, ATP5MG/subunit g, ATP5MK/subunit k, ATP5MJ/subunit j, ATP5F1C/subunit gamma, ATP5F1D/subunit delta, ATP5F1E/subunit epsilon, ATP5PF/subunit F6, ATP5PB/subunit b, ATP5PD/subunit d, ATP5PO/subunit OSCP. ATP synthase complex consists of a soluble F(1) head domain (subunits alpha(3) and beta(3)) - the catalytic core - and a membrane F(0) domain - the membrane proton channel (subunits c, a, 8, e, f, g, k and j). These two domains are linked by a central stalk (subunits gamma, delta, and epsilon) rotating inside the F1 region and a stationary peripheral stalk (subunits F6, b, d, and OSCP). Interacts with DNAJC30; interaction is direct.

It localises to the mitochondrion inner membrane. The catalysed reaction is H(+)(in) = H(+)(out). Its function is as follows. Subunit a, of the mitochondrial membrane ATP synthase complex (F(1)F(0) ATP synthase or Complex V) that produces ATP from ADP in the presence of a proton gradient across the membrane which is generated by electron transport complexes of the respiratory chain. ATP synthase complex consist of a soluble F(1) head domain - the catalytic core - and a membrane F(1) domain - the membrane proton channel. These two domains are linked by a central stalk rotating inside the F(1) region and a stationary peripheral stalk. During catalysis, ATP synthesis in the catalytic domain of F(1) is coupled via a rotary mechanism of the central stalk subunits to proton translocation. With the subunit c (ATP5MC1), forms the proton-conducting channel in the F(0) domain, that contains two crucial half-channels (inlet and outlet) that facilitate proton movement from the mitochondrial intermembrane space (IMS) into the matrix. Protons are taken up via the inlet half-channel and released through the outlet half-channel, following a Grotthuss mechanism. The protein is ATP synthase F(0) complex subunit a of Balaenoptera physalus (Fin whale).